Here is a 354-residue protein sequence, read N- to C-terminus: Uroporphyrinogen decarboxylase (354 aa).

Residues 30–34 (RQAGR), Asp79, Tyr154, Ser209, and His333 contribute to the substrate site.

Belongs to the uroporphyrinogen decarboxylase family. Homodimer.

The protein resides in the cytoplasm. The catalysed reaction is uroporphyrinogen III + 4 H(+) = coproporphyrinogen III + 4 CO2. The protein operates within porphyrin-containing compound metabolism; protoporphyrin-IX biosynthesis; coproporphyrinogen-III from 5-aminolevulinate: step 4/4. Its function is as follows. Catalyzes the decarboxylation of four acetate groups of uroporphyrinogen-III to yield coproporphyrinogen-III. This chain is Uroporphyrinogen decarboxylase, found in Mycolicibacterium vanbaalenii (strain DSM 7251 / JCM 13017 / BCRC 16820 / KCTC 9966 / NRRL B-24157 / PYR-1) (Mycobacterium vanbaalenii).